Reading from the N-terminus, the 199-residue chain is Recombination protein RecR (199 aa).

The C4-type zinc finger occupies 58-73 (CSVCTNLTDRDPCRIC). The Toprim domain maps to 81-176 (AVICVVEEPR…KVTRIAHGLP (96 aa)).

Belongs to the RecR family.

Its function is as follows. May play a role in DNA repair. It seems to be involved in an RecBC-independent recombinational process of DNA repair. It may act with RecF and RecO. This chain is Recombination protein RecR, found in Heliobacterium modesticaldum (strain ATCC 51547 / Ice1).